We begin with the raw amino-acid sequence, 434 residues long: Beta-enolase (434 aa).

Ser2 is modified (N-acetylserine). Residues His158 and Glu167 each coordinate substrate. Catalysis depends on Glu210, which acts as the Proton donor. Mg(2+)-binding residues include Asp245, Glu293, and Asp318. 2 residues coordinate substrate: Glu293 and Asp318. The active-site Proton acceptor is Lys343. Residues 370–373 and Lys394 contribute to the substrate site; that span reads SHRS.

It belongs to the enolase family. Homodimer. Interacts with PNKD. Requires Mg(2+) as cofactor.

It is found in the cytoplasm. The catalysed reaction is (2R)-2-phosphoglycerate = phosphoenolpyruvate + H2O. It participates in carbohydrate degradation; glycolysis; pyruvate from D-glyceraldehyde 3-phosphate: step 4/5. Glycolytic enzyme that catalyzes the conversion of 2-phosphoglycerate to phosphoenolpyruvate. This chain is Beta-enolase (ENO3), found in Gallus gallus (Chicken).